The sequence spans 93 residues: Conotoxin F_Vc1 (93 aa).

An N-terminal signal peptide occupies residues 1-22; the sequence is MQRGAVLLGVVAFLALWPQAGA. A propeptide spanning residues 23 to 33 is cleaved from the precursor; sequence EPYNLNDPDVR.

It belongs to the conotoxin F superfamily. Contains 4 disulfide bonds. In terms of tissue distribution, expressed by the venom duct.

Its subcellular location is the secreted. This chain is Conotoxin F_Vc1, found in Conus victoriae (Queen Victoria cone).